We begin with the raw amino-acid sequence, 67 residues long: Large ribosomal subunit protein bL35 (67 aa).

It belongs to the bacterial ribosomal protein bL35 family.

In Methylorubrum extorquens (strain CM4 / NCIMB 13688) (Methylobacterium extorquens), this protein is Large ribosomal subunit protein bL35.